Consider the following 1349-residue polypeptide: Aldehyde oxidase 2 (1349 aa).

The 89-residue stretch at 8–96 folds into the 2Fe-2S ferredoxin-type domain; it reads DELVFFVNGR…GAAVTTVEGV (89 aa). The [2Fe-2S] cluster site is built by Cys47, Cys52, Cys55, and Cys78. Gln117 serves as a coordination point for Mo-molybdopterin. [2Fe-2S] cluster contacts are provided by Cys118, Cys121, Cys153, and Cys155. Cys155 is a Mo-molybdopterin binding site. The region spanning 240 to 425 is the FAD-binding PCMH-type domain; that stretch reads FYGERVTWIS…ESVHIPHSQK (186 aa). FAD is bound by residues 268-275, Ala349, Ser358, His362, Asp371, and Leu415; that span reads LVVGNTSL. Residues 816–817, 1098–1101, Gln1213, and Leu1278 contribute to the Mo-molybdopterin site; these read GF and ASVG. Glu1280 serves as the catalytic Proton acceptor; for azaheterocycle hydroxylase activity.

Belongs to the xanthine dehydrogenase family. Homodimer. It depends on [2Fe-2S] cluster as a cofactor. FAD is required as a cofactor. Requires Mo-molybdopterin as cofactor. Only detected at very few levels in nasal mucosa.

It is found in the cytoplasm. It catalyses the reaction an aldehyde + O2 + H2O = a carboxylate + H2O2 + H(+). In terms of biological role, oxidase with broad substrate specificity, oxidizing aromatic azaheterocycles, such as phthalazine, as well as aldehydes, such as benzaldehyde and retinal. The sequence is that of Aldehyde oxidase 2 (AOX2) from Macaca fascicularis (Crab-eating macaque).